Consider the following 294-residue polypeptide: ATP phosphoribosyltransferase (294 aa).

The protein belongs to the ATP phosphoribosyltransferase family. Long subfamily. It depends on Mg(2+) as a cofactor.

The protein resides in the cytoplasm. The enzyme catalyses 1-(5-phospho-beta-D-ribosyl)-ATP + diphosphate = 5-phospho-alpha-D-ribose 1-diphosphate + ATP. Its pathway is amino-acid biosynthesis; L-histidine biosynthesis; L-histidine from 5-phospho-alpha-D-ribose 1-diphosphate: step 1/9. Its activity is regulated as follows. Feedback inhibited by histidine. Its function is as follows. Catalyzes the condensation of ATP and 5-phosphoribose 1-diphosphate to form N'-(5'-phosphoribosyl)-ATP (PR-ATP). Has a crucial role in the pathway because the rate of histidine biosynthesis seems to be controlled primarily by regulation of HisG enzymatic activity. This chain is ATP phosphoribosyltransferase, found in Maricaulis maris (strain MCS10) (Caulobacter maris).